The following is a 1905-amino-acid chain: Low-density lipoprotein receptor-related protein 4 (1905 aa).

The first 20 residues, Met-1–Ala-20, serve as a signal peptide directing secretion. At Ser-21 to Ser-1725 the chain is on the extracellular side. 8 consecutive LDL-receptor class A domains span residues Ala-26–Ile-67, Thr-70–Pro-106, Glu-109–Asp-144, Lys-147–Pro-183, Pro-190–Ser-226, Pro-230–Thr-266, Met-269–Glu-305, and Gln-311–Arg-350. 30 disulfides stabilise this stretch: Cys-27/Cys-44, Cys-34/Cys-57, Cys-51/Cys-66, Cys-71/Cys-83, Cys-78/Cys-96, Cys-90/Cys-105, Cys-110/Cys-122, Cys-117/Cys-135, Cys-129/Cys-143, Cys-148/Cys-160, Cys-155/Cys-173, Cys-167/Cys-182, Cys-191/Cys-203, Cys-198/Cys-216, Cys-210/Cys-225, Cys-231/Cys-243, Cys-238/Cys-256, Cys-250/Cys-265, Cys-270/Cys-282, Cys-277/Cys-295, Cys-289/Cys-304, Cys-312/Cys-324, Cys-319/Cys-337, Cys-331/Cys-349, Cys-358/Cys-369, Cys-365/Cys-378, Cys-380/Cys-393, Cys-399/Cys-409, Cys-405/Cys-418, and Cys-420/Cys-433. Asn-264 carries an N-linked (GlcNAc...) asparagine glycan. The EGF-like 1; calcium-binding domain maps to Gly-354–Gln-394. Residues Asp-395–Lys-434 form the EGF-like 2; calcium-binding domain. LDL-receptor class B repeat units follow at residues Glu-480–His-522, Asp-523–Glu-565, Gly-566–Gly-609, Arg-610–Ser-652, and Leu-653–Gln-693. The N-linked (GlcNAc...) asparagine glycan is linked to Asn-498. The EGF-like 3 domain occupies Gly-698 to Ala-737. 3 disulfide bridges follow: Cys-702/Cys-713, Cys-709/Cys-722, and Cys-724/Cys-736. N-linked (GlcNAc...) asparagine glycosylation occurs at Asn-719. 5 LDL-receptor class B repeats span residues Asp-785–Thr-827, Asn-828–Gly-870, Gly-871–Ser-914, Gln-915–Glu-956, and Arg-957–Arg-998. Residue Asn-901 is glycosylated (N-linked (GlcNAc...) asparagine). The N-linked (GlcNAc...) asparagine glycan is linked to Asn-1077. 10 LDL-receptor class B repeats span residues Gly-1093–Gly-1135, Arg-1136–Met-1178, Gly-1179–Ser-1222, Ser-1223–Ser-1263, Tyr-1264–Gln-1306, Gly-1397–Ala-1439, Arg-1440–Lys-1482, Gly-1483–Thr-1526, Arg-1527–Trp-1568, and Ile-1569–Arg-1610. N-linked (GlcNAc...) asparagine glycosylation is found at Asn-1415 and Asn-1467. The disordered stretch occupies residues Pro-1659–Thr-1686. A compositionally biased stretch (low complexity) spans Pro-1676 to Thr-1686. Residues Tyr-1726–Leu-1746 traverse the membrane as a helical segment. Residues Tyr-1747–Val-1905 lie on the Cytoplasmic side of the membrane. The Endocytosis signal signature appears at Asn-1766–Tyr-1769. Positions Ala-1852 to Val-1905 are disordered. The span at Pro-1882–Val-1905 shows a compositional bias: basic and acidic residues.

This sequence belongs to the LDLR family. Homooligomer. Interacts with MUSK; the heterodimer forms an AGRIN receptor complex that binds AGRIN resulting in activation of MUSK. Interacts (via the extracellular domain) with SOST; the interaction facilitates the inhibition of Wnt signaling. Interacts with MESD; the interaction promotes glycosylation of LRP4 and its cell-surface expression. As to expression, expressed in bone; present in osteoblasts and osteocytes. No expression is observed in osteoclast. Expressed in several regions of the brain.

It localises to the cell membrane. Functionally, mediates SOST-dependent inhibition of bone formation. Functions as a specific facilitator of SOST-mediated inhibition of Wnt signaling. Plays a key role in the formation and the maintenance of the neuromuscular junction (NMJ), the synapse between motor neuron and skeletal muscle. Directly binds AGRIN and recruits it to the MUSK signaling complex. Mediates the AGRIN-induced phosphorylation of MUSK, the kinase of the complex. The activation of MUSK in myotubes induces the formation of NMJ by regulating different processes including the transcription of specific genes and the clustering of AChR in the postsynaptic membrane. Alternatively, may be involved in the negative regulation of the canonical Wnt signaling pathway, being able to antagonize the LRP6-mediated activation of this pathway. More generally, has been proposed to function as a cell surface endocytic receptor binding and internalizing extracellular ligands for degradation by lysosomes. May play an essential role in the process of digit differentiation. This is Low-density lipoprotein receptor-related protein 4 (LRP4) from Homo sapiens (Human).